We begin with the raw amino-acid sequence, 302 residues long: Glutamate/aspartate import solute-binding protein (302 aa).

The N-terminal stretch at 1–22 is a signal peptide; the sequence is MQLRKPATAILALALSAGLAQA.

This sequence belongs to the bacterial solute-binding protein 3 family. As to quaternary structure, the complex is composed of two ATP-binding proteins (GltL), two transmembrane proteins (GltJ and GltK) and a solute-binding protein (GltI).

It localises to the periplasm. Functionally, part of the ABC transporter complex GltIJKL involved in glutamate and aspartate uptake. Binds to both glutamate and aspartate. The polypeptide is Glutamate/aspartate import solute-binding protein (gltI) (Escherichia coli (strain K12)).